The following is a 361-amino-acid chain: Phospho-N-acetylmuramoyl-pentapeptide-transferase (361 aa).

10 helical membrane-spanning segments follow: residues 18–38, 73–93, 97–117, 135–155, 168–188, 196–216, 235–255, 263–283, 288–308, and 338–358; these read VFNY…ILVL, TMGG…WGDL, FIWV…MDDY, LLQS…ATTG, VLPN…VGSS, GLDG…GVFA, GAGE…GFLW, VFMG…TAVV, LVYF…ILQV, and KVIV…LATL.

The protein belongs to the glycosyltransferase 4 family. MraY subfamily. Mg(2+) is required as a cofactor.

The protein localises to the cell inner membrane. It catalyses the reaction UDP-N-acetyl-alpha-D-muramoyl-L-alanyl-gamma-D-glutamyl-meso-2,6-diaminopimeloyl-D-alanyl-D-alanine + di-trans,octa-cis-undecaprenyl phosphate = di-trans,octa-cis-undecaprenyl diphospho-N-acetyl-alpha-D-muramoyl-L-alanyl-D-glutamyl-meso-2,6-diaminopimeloyl-D-alanyl-D-alanine + UMP. It participates in cell wall biogenesis; peptidoglycan biosynthesis. Catalyzes the initial step of the lipid cycle reactions in the biosynthesis of the cell wall peptidoglycan: transfers peptidoglycan precursor phospho-MurNAc-pentapeptide from UDP-MurNAc-pentapeptide onto the lipid carrier undecaprenyl phosphate, yielding undecaprenyl-pyrophosphoryl-MurNAc-pentapeptide, known as lipid I. This is Phospho-N-acetylmuramoyl-pentapeptide-transferase from Coxiella burnetii (strain CbuK_Q154) (Coxiella burnetii (strain Q154)).